We begin with the raw amino-acid sequence, 463 residues long: Phosphomannomutase/phosphoglucomutase (463 aa).

Serine 108 serves as the catalytic Phosphoserine intermediate. 4 residues coordinate Mg(2+): serine 108, aspartate 242, aspartate 244, and aspartate 246. Substrate is bound by residues glutamate 325, serine 327, and histidine 329.

It belongs to the phosphohexose mutase family. As to quaternary structure, monomer. Mg(2+) serves as cofactor.

The catalysed reaction is alpha-D-mannose 1-phosphate = D-mannose 6-phosphate. It catalyses the reaction alpha-D-glucose 1-phosphate = alpha-D-glucose 6-phosphate. The protein operates within nucleotide-sugar biosynthesis; GDP-alpha-D-mannose biosynthesis; alpha-D-mannose 1-phosphate from D-fructose 6-phosphate: step 2/2. It participates in bacterial outer membrane biogenesis; lipopolysaccharide biosynthesis. In terms of biological role, the phosphomannomutase activity produces a precursor for alginate polymerization. The alginate layer causes a mucoid phenotype and provides a protective barrier against host immune defenses and antibiotics. Also involved in core-LPS biosynthesis due to its phosphoglucomutase activity. Essential for biofilm production. This chain is Phosphomannomutase/phosphoglucomutase (algC), found in Pseudomonas putida (strain ATCC 47054 / DSM 6125 / CFBP 8728 / NCIMB 11950 / KT2440).